A 1514-amino-acid chain; its full sequence is MTTSRKSHAKDKKAGGEQDLADLKFRYDLLTNELFHLREFVSLVDYDPTHFNDSESFQKFLRETHLSLEERGEKFTDDVAKKGTNGDLTRRRRNLRTSTVVSSETTNEKKGDIELKLESIAPLVRNKCEELKYKLSDHSNRKSIVPQKRPIQHLKKREAAKSLKFKSERKENPLPLHEHIAEERYDHIAKVEEPSEAFTIKCPSDDSSFENTSEHYSDNFYFTTSSEEEDIKKKRGRKKKKPRIKLVVHPPKQTITNPLHVVKPGYESLHEYIASFKSLEDDLTLEEYNKYIDEQRRLLSRLKKGIENGALKYDKETDSLQPITSKEIKTIITYKPDPISYFYKQQDLQIHTDHLINQGIHMSKLFRSSTKARIARAKKVSQMIEQHFKHVAGAEERKAKEEERHKKSLARFAVQAVKKRWNMAEKAYRILRKDEEEQLKRIEGKQHLSKMLEKSTQLLEAQLNQVNDDGRSSTPSSDSNDVLSESDDDMDDELSTSSDEDEEVDADVGLENSPASTEATPTDESLNLIQLKEKYGHFNGSSTVYDSRNKDEKFPTLDKHESSSSESSVMTGEESSIYSSSENESQNENDRESDDKTPSVGLSALFGKGEESDGDLDLDDSEDFTVNSSSVEGEELEKDQVDNSAATFERAGDFVHTQNENRDDIKDVEEDAETKVQEEQLSVVDVPVPSLLRGNLRTYQKQGLNWLASLYNNHTNGILADEMGLGKTIQTISLLAYLACEKENWGPHLIVVPTSVLLNWEMEFKRFAPGFKVLTYYGSPQQRKEKRKGWNKPDAFHVCIVSYQLVVQDQHSFKRKRWQYMVLDEAHNIKNFRSTRWQALLNFNTQRRLLLTGTPLQNNLAELWSLLYFLMPQTVIDGKKVSGFADLDAFQQWFGRPVDKIIETGQNFGQDKETKKTVAKLHQVLRPYLLRRLKADVEKQMPAKYEHIVYCKLSKRQRFLYDDFMSRAQTKATLASGNFMSIVNCLMQLRKVCNHPNLFEVRPILTSFVLEHCVASDYKDVERTLLKLFKKNNQVNRVDLDFLNLVFTLNDKDLTSYHAEEISKLTCVKNFVEEVNKLRETNKQLQEEFGEASFLNFQDANQYFKYSNKQKLEGTVDMLNFLKMVNKLRCDRRPIFGKNLIDLLTKDRRVKYDKSSIIDNELIKPLQTRVLDNRKIIDTFAVLTPSAVSLDMRKLALGLNDDSSVGENTRLKVMQNCFEVSNPLHQLQTKLTIAFPDKSLLQYDCGKLQKLAILLQQLKDNGHRALIFTQMTKVLDVLEQFLNYHGYLYMRLDGATKIEDRQILTERFNTDSRITVFILSSRSGGLGINLTGADTVIFYDSDWNPAMDKQCQDRCHRIGQTRDVHIYRFVSEHTIESNILKKANQKRQLDNVVIQEGDFTTDYFSKLSVRDLLGSELPENASGGDKPLIADADVAAKDPRQLERLLAQAEDEDDVKAANLAMREVEIDNDDFDESTEKKAANEEEENHAELDEYEGTAHVDEYMIRFIANGYYY.

The 73-residue stretch at 339–411 (ISYFYKQQDL…EERHKKSLAR (73 aa)) folds into the HSA domain. The span at 465–480 (QVNDDGRSSTPSSDSN) shows a compositional bias: polar residues. 2 disordered regions span residues 465 to 524 (QVND…PTDE) and 538 to 641 (FNGS…KDQV). A compositionally biased stretch (acidic residues) spans 484 to 508 (SESDDDMDDELSTSSDEDEEVDADV). Over residues 513 to 524 (SPASTEATPTDE) the composition is skewed to polar residues. The span at 547–563 (SRNKDEKFPTLDKHESS) shows a compositional bias: basic and acidic residues. The segment covering 564 to 586 (SSESSVMTGEESSIYSSSENESQ) has biased composition (low complexity). Residues 588 to 597 (ENDRESDDKT) show a composition bias toward basic and acidic residues. Over residues 612-623 (SDGDLDLDDSED) the composition is skewed to acidic residues. The Helicase ATP-binding domain occupies 708–873 (ASLYNNHTNG…WSLLYFLMPQ (166 aa)). Residue 721-728 (DEMGLGKT) coordinates ATP. The DEAH box signature appears at 824 to 827 (DEAH). The region spanning 1247 to 1400 (KLQKLAILLQ…NVVIQEGDFT (154 aa)) is the Helicase C-terminal domain. The disordered stretch occupies residues 1469 to 1490 (NDDFDESTEKKAANEEEENHAE). Residues 1475 to 1490 (STEKKAANEEEENHAE) show a composition bias toward basic and acidic residues.

Belongs to the SNF2/RAD54 helicase family. SWR1 subfamily. In terms of assembly, component of the SWR1 chromatin-remodeling complex composed of at least ACT1, ARP4, RVB1, RVB2, ARP6, YAF9, VPS71, VPS72, SWC3, SWC4, SWC5, SWC7 and SWR1, and perhaps BDF1.

It localises to the nucleus. The enzyme catalyses ATP + H2O = ADP + phosphate + H(+). Catalytic component of the SWR1 complex which mediates the ATP-dependent exchange of histone H2A for the H2A variant HZT1 leading to transcriptional regulation of selected genes by chromatin remodeling. The polypeptide is Helicase SWR1 (SWR1) (Saccharomyces cerevisiae (strain ATCC 204508 / S288c) (Baker's yeast)).